A 160-amino-acid chain; its full sequence is Ribosomal RNA large subunit methyltransferase H (160 aa).

S-adenosyl-L-methionine-binding residues include L77 and G109.

The protein belongs to the RNA methyltransferase RlmH family. In terms of assembly, homodimer.

The protein localises to the cytoplasm. It carries out the reaction pseudouridine(1915) in 23S rRNA + S-adenosyl-L-methionine = N(3)-methylpseudouridine(1915) in 23S rRNA + S-adenosyl-L-homocysteine + H(+). Functionally, specifically methylates the pseudouridine at position 1915 (m3Psi1915) in 23S rRNA. This Moorella thermoacetica (strain ATCC 39073 / JCM 9320) protein is Ribosomal RNA large subunit methyltransferase H.